A 61-amino-acid chain; its full sequence is Sec-independent protein translocase protein TatA (61 aa).

The helical transmembrane segment at 2–22 (GLSGISPLSLLLILAIIVALF) threads the bilayer.

The protein belongs to the TatA/E family. The Tat system comprises two distinct complexes: a TatABC complex, containing multiple copies of TatA, TatB and TatC subunits, and a separate TatA complex, containing only TatA subunits. Substrates initially bind to the TatABC complex, which probably triggers association of the separate TatA complex to form the active translocon.

It is found in the cell inner membrane. Functionally, part of the twin-arginine translocation (Tat) system that transports large folded proteins containing a characteristic twin-arginine motif in their signal peptide across membranes. TatA could form the protein-conducting channel of the Tat system. The protein is Sec-independent protein translocase protein TatA of Legionella pneumophila (strain Paris).